We begin with the raw amino-acid sequence, 992 residues long: Disks large-associated protein 1 (992 aa).

Disordered stretches follow at residues 150–209 and 355–376; these read TKSH…SWWS and KAMGDEDSGDSDTSPKPSPKVA. Position 169 is a phosphoserine (Ser169). Over residues 194–209 the composition is skewed to low complexity; that stretch reads RSNASNASPTSPSWWS. Residues Ser362, Ser365, Ser368, Ser372, Ser389, Ser418, Ser421, Ser425, Ser428, Ser437, Ser509, Ser516, and Ser578 each carry the phosphoserine modification. The residue at position 579 (Thr579) is a Phosphothreonine. Phosphoserine is present on residues Ser581 and Ser605. Thr606 bears the Phosphothreonine mark. Phosphoserine is present on residues Ser608 and Ser611. 2 interaction with DYL2 regions span residues 665–676 and 687–698; these read LSIGIQVDDAEE and NKFQSVGVQVEE. Positions 914 to 980 are disordered; the sequence is WKQMDPLDKK…QNSATESAES (67 aa). 2 stretches are compositionally biased toward basic and acidic residues: residues 918–927 and 943–958; these read DPLDKKERRA and IRERSLESSQRQEARK. Ser947 is subject to Phosphoserine. Polar residues predominate over residues 969–978; it reads VRQNSATESA. The PDZ-binding signature appears at 990-992; it reads TRL.

It belongs to the SAPAP family. Interacts with the guanylate kinase-like domain of DLG1, DLG2, DLG3, DLG4 and AIP1. Interacts with the PDZ domain of SHANK1, SHANK2 and SHANK3. Found in a complex with DLG4 and SHANK1, SHANK2 or SHANK3. Found in a complex with DLG4 and BEGAIN. Interacts with DYL2 and LRFN1. Interacts with MPP2 (via the SH3-Guanylate kinase-like sub-module). In terms of processing, ubiquitinated by TRIM3; leading to proteasomal degradation. Highest levels in the neocortex, part of the hippocampus, the granule cell layer of the cerebellum, the glomerular layer of the olfactory bulb, the inner plexiform layer of the retina, the ventral and dorsal horn of the spinal cord, the neuromuscular junction and the submandibular ganglion.

The protein localises to the cell membrane. It is found in the postsynaptic density. It localises to the synapse. Part of the postsynaptic scaffold in neuronal cells. The sequence is that of Disks large-associated protein 1 (Dlgap1) from Mus musculus (Mouse).